A 200-amino-acid polypeptide reads, in one-letter code: Probable molybdenum cofactor guanylyltransferase (200 aa).

GTP-binding positions include 9–11, Lys-21, Asp-69, and Asp-100; that span reads LAG. Asp-100 is a Mg(2+) binding site.

This sequence belongs to the MobA family. Mg(2+) is required as a cofactor.

Its subcellular location is the cytoplasm. The catalysed reaction is Mo-molybdopterin + GTP + H(+) = Mo-molybdopterin guanine dinucleotide + diphosphate. Functionally, transfers a GMP moiety from GTP to Mo-molybdopterin (Mo-MPT) cofactor (Moco or molybdenum cofactor) to form Mo-molybdopterin guanine dinucleotide (Mo-MGD) cofactor. The polypeptide is Probable molybdenum cofactor guanylyltransferase (Bacillus cereus (strain G9842)).